A 130-amino-acid polypeptide reads, in one-letter code: MAGGLRGFVAELKKSTEFVAKVIFVKARLSDWLNSQVYPDERFSAKWRGVLKMFVDGQLDEESVYCLVNTIDPSKLLTVGQINYLARAFRNNRKMMSITQKFVDGYRLSDDDISELSNYLVAQVEEVYQL.

This is an uncharacterized protein from Orgyia pseudotsugata multicapsid polyhedrosis virus (OpMNPV).